Here is a 308-residue protein sequence, read N- to C-terminus: Testis-expressed protein 52 (308 aa).

As to expression, expressed in Testis.

The sequence is that of Testis-expressed protein 52 from Mus musculus (Mouse).